A 534-amino-acid polypeptide reads, in one-letter code: Origin of replication complex subunit 5 (534 aa).

The tract at residues 1–36 is disordered; that stretch reads MPPKEESSKVTRRSTRSSASVTVENSEPIESHTPTI. ATP is bound at residue 83–90; the sequence is GGASTGKT. A Nuclear localization signal motif is present at residues 129–136; that stretch reads HRKCSLNG. The disordered stretch occupies residues 397–428; that stretch reads MFDSTGGMDNRKRKRKASEKSMEKKEIAEQEA. A compositionally biased stretch (basic and acidic residues) spans 414-424; the sequence is SEKSMEKKEIA.

It belongs to the ORC5 family. In terms of assembly, component of the origin recognition complex (ORC) composed of at least ORC1 (ORC1A or ORC1B), ORC2, ORC3, ORC4, ORC5 and ORC6. ORC is regulated in a cell-cycle and development dependent manner. It is sequentially assembled at the exit from anaphase of mitosis and disassembled as cells enter S phase. Interacts directly with ORC1A, ORC1B, ORC2, ORC3, ORC4 and ORC6. As to expression, follow a cell-cycle regulation with a peak at the G1/S-phase. Mostly expressed in flower buds and cauline leaves, and, to a lower exent, in roots, leaves and stems. Expressed at low levels ubiquitously.

It localises to the nucleus. Its function is as follows. Component of the origin recognition complex (ORC) that binds origins of replication. DNA-binding is ATP-dependent. The specific DNA sequences that define origins of replication have not been identified yet. ORC is required to assemble the pre-replication complex necessary to initiate DNA replication. The chain is Origin of replication complex subunit 5 from Arabidopsis thaliana (Mouse-ear cress).